The primary structure comprises 447 residues: Cysteine--tRNA ligase (447 aa).

Cys28 contacts Zn(2+). The 'HIGH' region signature appears at 30–40 (PTVYNYIHIGN). Zn(2+) is bound by residues Cys211, His236, and Glu240. The 'KMSKS' region motif lies at 268–272 (KMSKS). ATP is bound at residue Lys271.

It belongs to the class-I aminoacyl-tRNA synthetase family. Monomer. Zn(2+) is required as a cofactor.

It localises to the cytoplasm. The catalysed reaction is tRNA(Cys) + L-cysteine + ATP = L-cysteinyl-tRNA(Cys) + AMP + diphosphate. This chain is Cysteine--tRNA ligase, found in Streptococcus pyogenes serotype M3 (strain ATCC BAA-595 / MGAS315).